The following is a 176-amino-acid chain: Glycine-rich RNA-binding protein 7 (176 aa).

The residue at position 2 (alanine 2) is an N-acetylalanine. Positions alanine 2–asparagine 41 are required for RNA chaperone activity. Residues tyrosine 8–serine 86 enclose the RRM domain. The residue at position 49 (arginine 49) is an ADP-ribosylarginine; by HopU1. Residues glutamate 83–tyrosine 103 are disordered. Residues glycine 88 to tyrosine 103 are compositionally biased toward gly residues. Positions glycine 88 to glycine 175 are glycine-rich (GR) required for cell-to-cell movement. Residues glycine 97–tyrosine 148 form a nuclear targeting sequence (M9) region. Residues serine 105 and serine 117 each carry the phosphoserine modification. The tract at residues tyrosine 131–tryptophan 176 is disordered.

Belongs to the GR-RBP family. As to quaternary structure, interacts with TRN1. Interacts with the Pseudomonas syringae type III effector HopU1. Binds to small phloem-mobile single-stranded RNAs (ss-sRNA, e.g. small interfering RNA (siRNA) and microRNA (miRNA)) in the phloeme exudate, including viral-derived sRNA (vsiRNA). ADP-ribosylated by the Pseudomonas syringae type III effector HopU1. ADP-ribosylation reduces the ability of the protein to bind RNA. As to expression, ubiquitous with strong expression in guard cell.

The protein resides in the cytoplasm. It localises to the nucleus. The protein localises to the secreted. Plays a role in RNA transcription or processing during stress. Binds RNAs and DNAs sequence with a preference to single-stranded nucleic acids. Displays strong affinity to poly(U) and poly(G) sequence. Involved in mRNA alternative splicing of numerous targets by modulating splice site selection. Negatively regulates the circadian oscillations of its own transcript as well as RBG8 transcript. Forms an interlocked post-transcriptional negative feedback loop with the RBG8 autoregulatory circuit. Both proteins negatively autoregulate and reciprocally crossregulate by binding to their pre-mRNAs and promoting unproductive splicing coupled to degradation via the NMD pathway. Involved in the regulation of abscisic acid and stress responses. Affects the growth and stress tolerance under high salt and dehydration stress conditions, and also confers freezing tolerance, particularly via the regulation of stomatal opening and closing in the guard cells. Exhibits RNA chaperone activity during the cold adaptation process. Involved in the export of mRNAs from the nucleus to the cytoplasm under cold stress conditions. Target of the Pseudomonas syringae type III effector HopU1, which could probably be involved in plant innate immunity. Component of the flowering autonomous pathway which promotes floral transition, at least partly by down-regulating FLC. Mediates cell-to-cell trafficking of RNA interference (RNAi) signals (small RNAs (sRNA), e.g. small interfering RNA (siRNA) and microRNA (miRNA)) which regulate growth and development, as well as responses to environmental inputs, including pathogen attack; can compromise zucchini yellow mosaic virus (ZYMV) and tobacco rattle virus (TRV) infections at the early stage. The sequence is that of Glycine-rich RNA-binding protein 7 from Arabidopsis thaliana (Mouse-ear cress).